Here is a 174-residue protein sequence, read N- to C-terminus: Co-chaperone protein HscB homolog (174 aa).

One can recognise a J domain in the interval N2–L74.

Belongs to the HscB family. As to quaternary structure, interacts with HscA and stimulates its ATPase activity.

Its function is as follows. Co-chaperone involved in the maturation of iron-sulfur cluster-containing proteins. Seems to help targeting proteins to be folded toward HscA. This is Co-chaperone protein HscB homolog from Shewanella baltica (strain OS195).